The sequence spans 220 residues: Large ribosomal subunit protein uL3 (220 aa).

Residues 126 to 158 (GFQGAIKRHGQSRGPMSHGSRYHRRPGSMGMAS) form a disordered region.

This sequence belongs to the universal ribosomal protein uL3 family. As to quaternary structure, part of the 50S ribosomal subunit. Forms a cluster with proteins L14 and L19.

Its function is as follows. One of the primary rRNA binding proteins, it binds directly near the 3'-end of the 23S rRNA, where it nucleates assembly of the 50S subunit. The protein is Large ribosomal subunit protein uL3 of Macrococcus caseolyticus (strain JCSC5402) (Macrococcoides caseolyticum).